Consider the following 352-residue polypeptide: tRNA N6-adenosine threonylcarbamoyltransferase (352 aa).

His115 and His119 together coordinate Fe cation. Substrate is bound by residues 137–141 (LVSGG), Asp170, Gly183, and Asn281. A Fe cation-binding site is contributed by Asp309.

The protein belongs to the KAE1 / TsaD family. Requires Fe(2+) as cofactor.

The protein resides in the cytoplasm. The catalysed reaction is L-threonylcarbamoyladenylate + adenosine(37) in tRNA = N(6)-L-threonylcarbamoyladenosine(37) in tRNA + AMP + H(+). In terms of biological role, required for the formation of a threonylcarbamoyl group on adenosine at position 37 (t(6)A37) in tRNAs that read codons beginning with adenine. Is involved in the transfer of the threonylcarbamoyl moiety of threonylcarbamoyl-AMP (TC-AMP) to the N6 group of A37, together with TsaE and TsaB. TsaD likely plays a direct catalytic role in this reaction. This is tRNA N6-adenosine threonylcarbamoyltransferase from Methylocapsa acidiphila.